The chain runs to 269 residues: 5'-nucleotidase SurE (269 aa).

A divalent metal cation contacts are provided by aspartate 8, aspartate 9, serine 39, and asparagine 92.

The protein belongs to the SurE nucleotidase family. A divalent metal cation serves as cofactor.

Its subcellular location is the cytoplasm. It carries out the reaction a ribonucleoside 5'-phosphate + H2O = a ribonucleoside + phosphate. Functionally, nucleotidase that shows phosphatase activity on nucleoside 5'-monophosphates. The chain is 5'-nucleotidase SurE from Psychrobacter cryohalolentis (strain ATCC BAA-1226 / DSM 17306 / VKM B-2378 / K5).